A 126-amino-acid chain; its full sequence is Small ribosomal subunit protein uS13 (126 aa).

Positions 92 to 126 are disordered; that stretch reads HRRGLPVRGQRTKTNARTRKGPRKTVAGKKKATRK.

Belongs to the universal ribosomal protein uS13 family. Part of the 30S ribosomal subunit. Forms a loose heterodimer with protein S19. Forms two bridges to the 50S subunit in the 70S ribosome.

Functionally, located at the top of the head of the 30S subunit, it contacts several helices of the 16S rRNA. In the 70S ribosome it contacts the 23S rRNA (bridge B1a) and protein L5 of the 50S subunit (bridge B1b), connecting the 2 subunits; these bridges are implicated in subunit movement. Contacts the tRNAs in the A and P-sites. In Deinococcus geothermalis (strain DSM 11300 / CIP 105573 / AG-3a), this protein is Small ribosomal subunit protein uS13.